Reading from the N-terminus, the 494-residue chain is Cytochrome P450 2C23 (494 aa).

A Phosphoserine modification is found at S131. An N6-acetyllysine mark is found at K253 and K379. C439 contributes to the heme binding site.

The protein belongs to the cytochrome P450 family. The cofactor is heme. Expressed in kidney and liver. Expressed in cortical tubules of kidney (at protein level).

The protein localises to the endoplasmic reticulum membrane. Its subcellular location is the microsome membrane. It carries out the reaction (5Z,8Z,11Z,14Z)-eicosatetraenoate + reduced [NADPH--hemoprotein reductase] + O2 = (8R,9S)-epoxy-(5Z,11Z,14Z)-eicosatrienoate + oxidized [NADPH--hemoprotein reductase] + H2O + H(+). The enzyme catalyses (5Z,8Z,11Z,14Z)-eicosatetraenoate + reduced [NADPH--hemoprotein reductase] + O2 = (11R,12S)-epoxy-(5Z,8Z,14Z)-eicosatrienoate + oxidized [NADPH--hemoprotein reductase] + H2O + H(+). It catalyses the reaction (5Z,8Z,11Z,14Z)-eicosatetraenoate + reduced [NADPH--hemoprotein reductase] + O2 = (11S,12R)-epoxy-(5Z,8Z,14Z)-eicosatrienoate + oxidized [NADPH--hemoprotein reductase] + H2O + H(+). The catalysed reaction is (5Z,8Z,11Z,14Z)-eicosatetraenoate + reduced [NADPH--hemoprotein reductase] + O2 = (14R,15S)-epoxy-(5Z,8Z,11Z)-eicosatrienoate + oxidized [NADPH--hemoprotein reductase] + H2O + H(+). It carries out the reaction (5Z,8Z,11Z,14Z)-eicosatetraenoate + reduced [NADPH--hemoprotein reductase] + O2 = (14S,15R)-epoxy-(5Z,8Z,11Z)-eicosatrienoate + oxidized [NADPH--hemoprotein reductase] + H2O + H(+). The enzyme catalyses (5Z,8Z,11Z,14Z,17Z)-eicosapentaenoate + reduced [NADPH--hemoprotein reductase] + O2 = 8,9-epoxy-(5Z,11Z,14Z,17Z)-eicosatetraenoate + oxidized [NADPH--hemoprotein reductase] + H2O + H(+). It catalyses the reaction (5Z,8Z,11Z,14Z,17Z)-eicosapentaenoate + reduced [NADPH--hemoprotein reductase] + O2 = 11,12-epoxy-(5Z,8Z,14Z,17Z)-eicosatetraenoate + oxidized [NADPH--hemoprotein reductase] + H2O + H(+). The catalysed reaction is (5Z,8Z,11Z,14Z,17Z)-eicosapentaenoate + reduced [NADPH--hemoprotein reductase] + O2 = 14,15-epoxy-(5Z,8Z,11Z,17Z)-eicosatetraenoate + oxidized [NADPH--hemoprotein reductase] + H2O + H(+). It carries out the reaction (5Z,8Z,11Z,14Z,17Z)-eicosapentaenoate + reduced [NADPH--hemoprotein reductase] + O2 = (17R,18S)-epoxy-(5Z,8Z,11Z,14Z)-eicosatetraenoate + oxidized [NADPH--hemoprotein reductase] + H2O + H(+). The enzyme catalyses (5Z,8Z,11Z,14Z,17Z)-eicosapentaenoate + reduced [NADPH--hemoprotein reductase] + O2 = (17S,18R)-epoxy-(5Z,8Z,11Z,14Z)-eicosatetraenoate + oxidized [NADPH--hemoprotein reductase] + H2O + H(+). It catalyses the reaction 20-hydroxy-(5Z,8Z,11Z,14Z)-eicosatetraenoate + reduced [NADPH--hemoprotein reductase] + O2 = 20-hydroxy-8,9-epoxy-(5Z,11Z,14Z)-eicosatrienoate + oxidized [NADPH--hemoprotein reductase] + H2O + H(+). Its pathway is lipid metabolism; arachidonate metabolism. A cytochrome P450 monooxygenase involved in polyunsaturated fatty acids (PUFAs) metabolism and signaling. Catalyzes preferentially the epoxidation of double bonds of PUFAs. Converts arachidonic acid (ARA, C20:4(n-6)) primarily to stereospecific products 8R,9S-, 11R,12S-, and 14S,15R-EET. Plays a major role in the formation of EETs and hydroxy-EETs (HEETs) in kidney. Via EETs may inhibit the epithelial sodium channels (ENaCs) in nephron segments, preventing excessive sodium absorption during high dietary salt intake. Participates in the formation of anti-inflammatory hydroxyepoxyeicosatrienoic acids (HEETs) by converting 20-hydroxyeicosatetraenoic acid (20-HETE) to 20,8,9-HEET, an activator of PPARA. Metabolizes eicosapentaenoic acid (EPA, C20:5(n-3)) to epoxyeicosatetraenoic acid (EETeTr) regioisomers, 8,9-, 11,12-, 14,15-, and 17,18-EETeTr, preferentially producing 17R,18S enantiomer. Mechanistically, uses molecular oxygen inserting one oxygen atom into a substrate, and reducing the second into a water molecule, with two electrons provided by NADPH via cytochrome P450 reductase (NADPH--hemoprotein reductase). The chain is Cytochrome P450 2C23 from Rattus norvegicus (Rat).